The chain runs to 168 residues: Gremlin-2 (168 aa).

The signal sequence occupies residues 1–21; sequence MFWKLSLSLFLVAVLVKVAEA. A glycan (N-linked (GlcNAc...) asparagine) is linked at Asn-40. Intrachain disulfides connect Cys-73-Cys-123, Cys-87-Cys-137, Cys-97-Cys-155, and Cys-101-Cys-157. The CTCK domain occupies 73–163; that stretch reads CKTQPLRQTV…QCRCMSVNLS (91 aa). The N-linked (GlcNAc...) asparagine glycan is linked to Asn-161.

This sequence belongs to the DAN family. In terms of assembly, homodimer. Interacts with BMP2, BMP4 and BMP7, but has lower affinity for BMP7 than for BMP2 and BMP4. Binds heparin; this impairs the interaction with BMP2. Post-translationally, N-glycosylated.

The protein localises to the secreted. Cytokine that inhibits the activity of BMP2 and BMP4 in a dose-dependent manner, and thereby modulates signaling by BMP family members. Contributes to the regulation of embryonic morphogenesis via BMP family members. Antagonizes BMP4-induced suppression of progesterone production in granulosa cells. In Homo sapiens (Human), this protein is Gremlin-2 (GREM2).